A 164-amino-acid chain; its full sequence is Phosphopantetheine adenylyltransferase (164 aa).

Serine 11 provides a ligand contact to substrate. ATP is bound by residues 11-12 (SF) and histidine 19. Substrate-binding residues include lysine 43, alanine 76, and arginine 90. Residues 91–93 (GLR), glutamate 101, and 126–132 (YQHISSS) each bind ATP.

Belongs to the bacterial CoaD family. Homohexamer. It depends on Mg(2+) as a cofactor.

It localises to the cytoplasm. The catalysed reaction is (R)-4'-phosphopantetheine + ATP + H(+) = 3'-dephospho-CoA + diphosphate. Its pathway is cofactor biosynthesis; coenzyme A biosynthesis; CoA from (R)-pantothenate: step 4/5. In terms of biological role, reversibly transfers an adenylyl group from ATP to 4'-phosphopantetheine, yielding dephospho-CoA (dPCoA) and pyrophosphate. The chain is Phosphopantetheine adenylyltransferase from Streptococcus sanguinis (strain SK36).